The following is a 573-amino-acid chain: Isocitrate dehydrogenase kinase/phosphatase (573 aa).

Residues Ala318–Met324 and Lys339 contribute to the ATP site. Asp374 is an active-site residue.

It belongs to the AceK family.

The protein localises to the cytoplasm. It catalyses the reaction L-seryl-[isocitrate dehydrogenase] + ATP = O-phospho-L-seryl-[isocitrate dehydrogenase] + ADP + H(+). Functionally, bifunctional enzyme which can phosphorylate or dephosphorylate isocitrate dehydrogenase (IDH) on a specific serine residue. This is a regulatory mechanism which enables bacteria to bypass the Krebs cycle via the glyoxylate shunt in response to the source of carbon. When bacteria are grown on glucose, IDH is fully active and unphosphorylated, but when grown on acetate or ethanol, the activity of IDH declines drastically concomitant with its phosphorylation. The chain is Isocitrate dehydrogenase kinase/phosphatase from Stutzerimonas stutzeri (strain A1501) (Pseudomonas stutzeri).